Here is a 105-residue protein sequence, read N- to C-terminus: Resistin-like beta (105 aa).

Residues 1-23 form the signal peptide; the sequence is MKPTLCFLFILVSLFPLIVPGNA. Intrachain disulfides connect cysteine 49/cysteine 102, cysteine 61/cysteine 101, cysteine 70/cysteine 87, cysteine 72/cysteine 89, and cysteine 76/cysteine 91.

It belongs to the resistin/FIZZ family. In terms of assembly, homodimer; disulfide-linked. Heterodimer with RETNLG. As to expression, strongly expressed in colon, and at lower levels in ileum. In colon, found throughout the crypt and surface epithelium and in goblet cells (at protein level). Specific to the gastrointestinal tract; not detected in other tissues tested.

It is found in the secreted. Probable hormone. The sequence is that of Resistin-like beta (Retnlb) from Mus musculus (Mouse).